The primary structure comprises 1503 residues: DNA-directed RNA polymerase subunit beta' (1503 aa).

Residues Cys71, Cys73, Cys86, and Cys89 each coordinate Zn(2+). 3 residues coordinate Mg(2+): Asp470, Asp472, and Asp474. 4 residues coordinate Zn(2+): Cys800, Cys874, Cys881, and Cys884.

The protein belongs to the RNA polymerase beta' chain family. In terms of assembly, the RNAP catalytic core consists of 2 alpha, 1 beta, 1 beta' and 1 omega subunit. When a sigma factor is associated with the core the holoenzyme is formed, which can initiate transcription. The cofactor is Mg(2+). Requires Zn(2+) as cofactor.

It carries out the reaction RNA(n) + a ribonucleoside 5'-triphosphate = RNA(n+1) + diphosphate. Its function is as follows. DNA-dependent RNA polymerase catalyzes the transcription of DNA into RNA using the four ribonucleoside triphosphates as substrates. The chain is DNA-directed RNA polymerase subunit beta' from Sulfurimonas denitrificans (strain ATCC 33889 / DSM 1251) (Thiomicrospira denitrificans (strain ATCC 33889 / DSM 1251)).